The primary structure comprises 209 residues: Small ribosomal subunit protein uS4 (209 aa).

The region spanning 98–158 is the S4 RNA-binding domain; the sequence is SRVDNIVYRL…EKSRSLAAIK (61 aa).

The protein belongs to the universal ribosomal protein uS4 family. As to quaternary structure, part of the 30S ribosomal subunit. Contacts protein S5. The interaction surface between S4 and S5 is involved in control of translational fidelity.

One of the primary rRNA binding proteins, it binds directly to 16S rRNA where it nucleates assembly of the body of the 30S subunit. Its function is as follows. With S5 and S12 plays an important role in translational accuracy. This chain is Small ribosomal subunit protein uS4, found in Pseudothermotoga lettingae (strain ATCC BAA-301 / DSM 14385 / NBRC 107922 / TMO) (Thermotoga lettingae).